We begin with the raw amino-acid sequence, 352 residues long: Biotin synthase (352 aa).

Residues Asn-44 to Lys-262 enclose the Radical SAM core domain. 3 residues coordinate [4Fe-4S] cluster: Cys-59, Cys-63, and Cys-66. Cys-103, Cys-134, Cys-194, and Arg-266 together coordinate [2Fe-2S] cluster.

Belongs to the radical SAM superfamily. Biotin synthase family. Homodimer. [4Fe-4S] cluster is required as a cofactor. [2Fe-2S] cluster serves as cofactor.

It catalyses the reaction (4R,5S)-dethiobiotin + (sulfur carrier)-SH + 2 reduced [2Fe-2S]-[ferredoxin] + 2 S-adenosyl-L-methionine = (sulfur carrier)-H + biotin + 2 5'-deoxyadenosine + 2 L-methionine + 2 oxidized [2Fe-2S]-[ferredoxin]. It participates in cofactor biosynthesis; biotin biosynthesis; biotin from 7,8-diaminononanoate: step 2/2. Functionally, catalyzes the conversion of dethiobiotin (DTB) to biotin by the insertion of a sulfur atom into dethiobiotin via a radical-based mechanism. The polypeptide is Biotin synthase (Pseudomonas aeruginosa (strain UCBPP-PA14)).